Here is a 325-residue protein sequence, read N- to C-terminus: MSFSSTAKAEVSKKLSQNSCCARAAAAAFLKFTGNIYELDGTFSFKTSFENAQTARSFFLLMKNGFSKHCEVSIKKNSKLQKNYVYTIFLPPSSDNIGVLKDLHFVRKGAKEYHLSFSLKEELVRKKCCRKAFLQATFLSCGSITNPEKMYHLEFDVKTKDDAEFLQKVLKSFEFEAKIVERKSHYVVYLKEGDRIVDFLNIIGAHSSLLELENIRIVKELRNNVNRLVNCETANLEKTINASMRHIENIEFIERTIGIENLPQNLQEIARLRIKYKDASLKELGNMLEKPLGKSGVNHRLRKIDKIAEELRKGGVVHAKPSHED.

A DNA-binding region (H-T-H motif) is located at residues 280–313; sequence SLKELGNMLEKPLGKSGVNHRLRKIDKIAEELRK.

The protein belongs to the WhiA family.

Its function is as follows. Involved in cell division and chromosome segregation. The polypeptide is Probable cell division protein WhiA (Caldicellulosiruptor bescii (strain ATCC BAA-1888 / DSM 6725 / KCTC 15123 / Z-1320) (Anaerocellum thermophilum)).